We begin with the raw amino-acid sequence, 109 residues long: Nucleoid-associated protein Cvib_1034 (109 aa).

It belongs to the YbaB/EbfC family. As to quaternary structure, homodimer.

It localises to the cytoplasm. The protein localises to the nucleoid. Binds to DNA and alters its conformation. May be involved in regulation of gene expression, nucleoid organization and DNA protection. This chain is Nucleoid-associated protein Cvib_1034, found in Chlorobium phaeovibrioides (strain DSM 265 / 1930) (Prosthecochloris vibrioformis (strain DSM 265)).